We begin with the raw amino-acid sequence, 280 residues long: Bifunctional protein FolD (280 aa).

Residues 166–168 and serine 191 each bind NADP(+); that span reads GRS.

It belongs to the tetrahydrofolate dehydrogenase/cyclohydrolase family. In terms of assembly, homodimer.

The catalysed reaction is (6R)-5,10-methylene-5,6,7,8-tetrahydrofolate + NADP(+) = (6R)-5,10-methenyltetrahydrofolate + NADPH. The enzyme catalyses (6R)-5,10-methenyltetrahydrofolate + H2O = (6R)-10-formyltetrahydrofolate + H(+). Its pathway is one-carbon metabolism; tetrahydrofolate interconversion. Its function is as follows. Catalyzes the oxidation of 5,10-methylenetetrahydrofolate to 5,10-methenyltetrahydrofolate and then the hydrolysis of 5,10-methenyltetrahydrofolate to 10-formyltetrahydrofolate. This chain is Bifunctional protein FolD, found in Teredinibacter turnerae (strain ATCC 39867 / T7901).